The chain runs to 353 residues: Photosystem II protein D1 (353 aa).

Residue threonine 2 is modified to N-acetylthreonine. Threonine 2 bears the Phosphothreonine mark. The next 3 membrane-spanning stretches (helical) occupy residues 29 to 46 (YIGW…TATS), 118 to 133 (HFLL…EWEL), and 142 to 156 (WIAV…AATA). Histidine 118 is a chlorophyll a binding site. Tyrosine 126 is a pheophytin a binding site. The [CaMn4O5] cluster site is built by aspartate 170 and glutamate 189. The helical transmembrane segment at 197 to 218 (FHMLGVAGVFGGSLFSAMHGSL) threads the bilayer. Histidine 198 contributes to the chlorophyll a binding site. A quinone contacts are provided by residues histidine 215 and 264–265 (SF). Fe cation is bound at residue histidine 215. A Fe cation-binding site is contributed by histidine 272. The chain crosses the membrane as a helical span at residues 274-288 (FLAAWPVIGIWFTAL). Residues histidine 332, glutamate 333, aspartate 342, and alanine 344 each coordinate [CaMn4O5] cluster. Residues 345 to 353 (SVEAPSVNG) constitute a propeptide that is removed on maturation.

It belongs to the reaction center PufL/M/PsbA/D family. As to quaternary structure, PSII is composed of 1 copy each of membrane proteins PsbA, PsbB, PsbC, PsbD, PsbE, PsbF, PsbH, PsbI, PsbJ, PsbK, PsbL, PsbM, PsbT, PsbX, PsbY, PsbZ, Psb30/Ycf12, at least 3 peripheral proteins of the oxygen-evolving complex and a large number of cofactors. It forms dimeric complexes. It depends on The D1/D2 heterodimer binds P680, chlorophylls that are the primary electron donor of PSII, and subsequent electron acceptors. It shares a non-heme iron and each subunit binds pheophytin, quinone, additional chlorophylls, carotenoids and lipids. D1 provides most of the ligands for the Mn4-Ca-O5 cluster of the oxygen-evolving complex (OEC). There is also a Cl(-1) ion associated with D1 and D2, which is required for oxygen evolution. The PSII complex binds additional chlorophylls, carotenoids and specific lipids. as a cofactor. Tyr-161 forms a radical intermediate that is referred to as redox-active TyrZ, YZ or Y-Z. Post-translationally, C-terminally processed by CTPA; processing is essential to allow assembly of the oxygen-evolving complex and thus photosynthetic growth.

It is found in the plastid. The protein resides in the chloroplast thylakoid membrane. It catalyses the reaction 2 a plastoquinone + 4 hnu + 2 H2O = 2 a plastoquinol + O2. In terms of biological role, photosystem II (PSII) is a light-driven water:plastoquinone oxidoreductase that uses light energy to abstract electrons from H(2)O, generating O(2) and a proton gradient subsequently used for ATP formation. It consists of a core antenna complex that captures photons, and an electron transfer chain that converts photonic excitation into a charge separation. The D1/D2 (PsbA/PsbD) reaction center heterodimer binds P680, the primary electron donor of PSII as well as several subsequent electron acceptors. This Chlorokybus atmophyticus (Soil alga) protein is Photosystem II protein D1.